We begin with the raw amino-acid sequence, 179 residues long: Large ribosomal subunit protein uL5 (179 aa).

It belongs to the universal ribosomal protein uL5 family. In terms of assembly, part of the 50S ribosomal subunit; part of the 5S rRNA/L5/L18/L25 subcomplex. Contacts the 5S rRNA and the P site tRNA. Forms a bridge to the 30S subunit in the 70S ribosome.

This is one of the proteins that bind and probably mediate the attachment of the 5S RNA into the large ribosomal subunit, where it forms part of the central protuberance. In the 70S ribosome it contacts protein S13 of the 30S subunit (bridge B1b), connecting the 2 subunits; this bridge is implicated in subunit movement. Contacts the P site tRNA; the 5S rRNA and some of its associated proteins might help stabilize positioning of ribosome-bound tRNAs. This chain is Large ribosomal subunit protein uL5, found in Buchnera aphidicola subsp. Baizongia pistaciae (strain Bp).